The primary structure comprises 386 residues: MATTKSFLILFFMILATTSSTCAKLEEMVTVLSIDGGGIKGIIPAIILEFLEGQLQEVDNNKDARLADYFDVIGGTSTGGLLTAMITTPNENNRPFAAAKDIVPFYFEHGPHIFNYSGSIFGPRYDGKYLLQVLQEKLGETRVHQALTEVAISSFDIKTNKPVIFTKSNLAKSPELDAKMYDICYSTAAAPIYFPPHHFVTHTSNGATYEFNLVDGGVATVGDPALLSLSVATRLAQEDPAFSSIKSLDYKQMLLLSLGTGTNSEFDKTYTAEEAAKWGPLRWMLAIQQMTNAASSYMTDYYISTVFQARHSQNNYLRVQENALTGTTTEMDDASEANMELLVQVGETLLKKPVSKDSPETYEEALKRFAKLLSDRKKLRANKASY.

The signal sequence occupies residues 1 to 23 (MATTKSFLILFFMILATTSSTCA). The PNPLA domain maps to 32-229 (LSIDGGGIKG…TVGDPALLSL (198 aa)). Positions 36-41 (GGGIKG) match the GXGXXG motif. The GXSXG motif lies at 75–79 (GTSTG). S77 serves as the catalytic Nucleophile. N-linked (GlcNAc...) asparagine glycosylation occurs at N115. D215 (proton acceptor) is an active-site residue. The short motif at 215 to 217 (DGG) is the DGA/G element. Residues 321–384 (ENALTGTTTE…DRKKLRANKA (64 aa)) adopt a coiled-coil conformation.

It belongs to the patatin family. In terms of tissue distribution, tuber.

The protein localises to the vacuole. Its function is as follows. Probable lipolytic acyl hydrolase (LAH), an activity which is thought to be involved in the response of tubers to pathogens. The polypeptide is Patatin-15 (Solanum tuberosum (Potato)).